The sequence spans 456 residues: ATP synthase subunit beta 1 (456 aa).

152–159 (GGAGVGKS) contacts ATP.

Belongs to the ATPase alpha/beta chains family. F-type ATPases have 2 components, CF(1) - the catalytic core - and CF(0) - the membrane proton channel. CF(1) has five subunits: alpha(3), beta(3), gamma(1), delta(1), epsilon(1). CF(0) has three main subunits: a(1), b(2) and c(9-12). The alpha and beta chains form an alternating ring which encloses part of the gamma chain. CF(1) is attached to CF(0) by a central stalk formed by the gamma and epsilon chains, while a peripheral stalk is formed by the delta and b chains.

It is found in the cell membrane. It carries out the reaction ATP + H2O + 4 H(+)(in) = ADP + phosphate + 5 H(+)(out). Functionally, produces ATP from ADP in the presence of a proton gradient across the membrane. The catalytic sites are hosted primarily by the beta subunits. This chain is ATP synthase subunit beta 1, found in Listeria monocytogenes serovar 1/2a (strain ATCC BAA-679 / EGD-e).